The chain runs to 686 residues: Cation channel sperm-associated protein 1 (686 aa).

Residues 1–15 show a composition bias toward basic and acidic residues; sequence MDQSSRRDESYHETH. Disordered regions lie at residues 1–57, 97–177, 207–271, and 289–318; these read MDQS…QQPY, TLPN…NRDH, DHHH…KSTA, and QSRESLRESASLSEGEDHVQKRKKAQRAHK. Over 1 to 351 the chain is Cytoplasmic; sequence MDQSSRRDES…QMILSLTQSL (351 aa). Residues 25–35 show a composition bias toward basic residues; sequence SHPHPHPHPTL. The span at 128 to 142 shows a compositional bias: basic and acidic residues; the sequence is DPNHHPHQDDPHRPS. A compositionally biased stretch (polar residues) spans 147–160; the sequence is HPSSTGSHQGTTHQ. Composition is skewed to basic residues over residues 211–229 and 235–244; these read EGHHAHSHHGEHPHHKEQR and HMHHHIHHRS. Positions 245–271 are enriched in polar residues; that stretch reads PSASQLSHKSHSTLATSPSHVGSKSTA. The segment covering 308 to 318 has biased composition (basic residues); it reads QKRKKAQRAHK. Residues 352–373 form a helical membrane-spanning segment; the sequence is GFETFIFIVVCLNTVILVAQTF. Residues 374–382 are Extracellular-facing; sequence TELEIRGEW. Residues 383–404 traverse the membrane as a helical segment; the sequence is YFMVLDSIFLSIYVLEAVLKLI. The Cytoplasmic portion of the chain corresponds to 405-412; that stretch reads ALGLEYFY. The chain crosses the membrane as a helical span at residues 413–435; it reads DPWNNLDFFIMVMAVLDFVLLQI. Over 436–446 the chain is Extracellular; the sequence is NSLSYSFYNHS. The chain crosses the membrane as a helical span at residues 447–469; sequence LFRILKVFKSMRALRAIRVLRRL. The Cytoplasmic portion of the chain corresponds to 470-487; it reads SILTSLHEVAGTLSGSLP. Residues 488–510 traverse the membrane as a helical segment; that stretch reads SITAILTLMFTCLFLFSVVLRAL. At 511–521 the chain is on the extracellular side; sequence FQDSDPKRFQN. An intramembrane region (helical; Pore-forming) is located at residues 522–534; that stretch reads IFTTLFTLFTMLT. Residues 535-551 lie on the Extracellular side of the membrane; that stretch reads LDDWSLIYIDNRAQGAW. Residues 552-577 traverse the membrane as a helical segment; it reads YIIPILMIYIVIQYFIFLNLVIAVLV. Residues 578–686 lie on the Cytoplasmic side of the membrane; sequence DNFQMALLKG…FEAGDDDYGK (109 aa).

This sequence belongs to the cation channel sperm-associated (TC 1.A.1.19) family. Component of the CatSper complex or CatSpermasome composed of the core pore-forming members CATSPER1, CATSPER2, CATSPER3 and CATSPER4 as well as auxiliary members CATSPERB, CATSPERG2, CATSPERD, CATSPERE, CATSPERZ, C2CD6/CATSPERT, SLCO6C1, TMEM249, TMEM262 and EFCAB9. HSPA1 may be an additional auxiliary complex member. The core complex members CATSPER1, CATSPER2, CATSPER3 and CATSPER4 form a heterotetrameric channel. The auxiliary CATSPERB, CATSPERG2, CATSPERD and CATSPERE subunits form a pavilion-like structure over the pore which stabilizes the complex through interactions with CATSPER4, CATSPER3, CATSPER1 and CATSPER2 respectively. SLCO6C1 interacts with CATSPERE, and TMEM262/CATSPERH interacts with CATSPERB, further stabilizing the complex. C2CD6/CATSPERT interacts at least with CATSPERD and is required for targeting the CatSper complex in the flagellar membrane. Interacts with Ca(v)3.3/CACNA1I, leading to suppression of T-type calcium channel activity. As to expression, testis-specific.

It localises to the cell projection. It is found in the cilium. The protein localises to the flagellum membrane. It carries out the reaction Ca(2+)(in) = Ca(2+)(out). Its activity is regulated as follows. Activated by intracellular alkalinization. In contrast to the human ortholog, not activated by progesterone. Pore-forming subunit of the CatSper complex, a sperm-specific voltage-gated calcium channel that plays a central role in sperm cell hyperactivation. Controls calcium entry to mediate the hyperactivated motility, a step needed for sperm motility which is essential late in the preparation of sperm for fertilization. In Mus musculus (Mouse), this protein is Cation channel sperm-associated protein 1 (Catsper1).